A 396-amino-acid polypeptide reads, in one-letter code: Elongation factor Tu (396 aa).

Positions 10-206 constitute a tr-type G domain; the sequence is KPHVNVGTIG…ALDNYIPLPE (197 aa). Positions 19–26 are G1; it reads GHVDHGKT. A GTP-binding site is contributed by 19-26; sequence GHVDHGKT. A Mg(2+)-binding site is contributed by Thr26. The segment at 60 to 64 is G2; that stretch reads GITIN. Residues 81 to 84 are G3; the sequence is DCPG. GTP is bound by residues 81–85 and 136–139; these read DCPGH and NKCD. The tract at residues 136 to 139 is G4; that stretch reads NKCD. Residues 174–176 form a G5 region; sequence SAK.

The protein belongs to the TRAFAC class translation factor GTPase superfamily. Classic translation factor GTPase family. EF-Tu/EF-1A subfamily. As to quaternary structure, monomer.

The protein localises to the cytoplasm. The enzyme catalyses GTP + H2O = GDP + phosphate + H(+). Functionally, GTP hydrolase that promotes the GTP-dependent binding of aminoacyl-tRNA to the A-site of ribosomes during protein biosynthesis. This Polaromonas naphthalenivorans (strain CJ2) protein is Elongation factor Tu.